Here is a 182-residue protein sequence, read N- to C-terminus: UPF0397 protein BcerKBAB4_2500 (182 aa).

The next 5 helical transmembrane spans lie at 9–29 (VVAIGIGAALYGVLGLWGFSI), 40–60 (AILTVFGALFGPVAGLLIGLI), 71–91 (WGIWWGWVISSGIIGLAMGLI), 114–134 (IAGLIGIVIAIIFAGSFDIIV), and 142–162 (IVIQVLGATIADVIVFLVLGL).

Belongs to the UPF0397 family.

It is found in the cell membrane. The chain is UPF0397 protein BcerKBAB4_2500 from Bacillus mycoides (strain KBAB4) (Bacillus weihenstephanensis).